The primary structure comprises 103 residues: MSGRGKGGKGLGKGGAKRHRKVLRDNIQGITKPAIRRLARRGGVKRISGLIYEETRGVLKVFLENVIRDAVTYTEHAKRKTVTAMDVVYALKRQGRTLYGFGG.

A compositionally biased stretch (gly residues) spans 1–14 (MSGRGKGGKGLGKG). The tract at residues 1–20 (MSGRGKGGKGLGKGGAKRHR) is disordered. Serine 2 carries the N-acetylserine modification. Position 2 is a phosphoserine (serine 2). Asymmetric dimethylarginine; by PRMT1; alternate is present on arginine 4. Residue arginine 4 is modified to Citrulline; alternate. Omega-N-methylarginine; by PRMT1; alternate is present on arginine 4. The residue at position 4 (arginine 4) is a Symmetric dimethylarginine; by PRMT5 and PRMT7; alternate. Lysine 6, lysine 9, lysine 13, and lysine 17 each carry N6-(2-hydroxyisobutyryl)lysine; alternate. Lysine 6 bears the N6-acetyl-N6-methyllysine; alternate mark. An N6-acetyllysine mark is found at lysine 6, lysine 9, lysine 13, and lysine 17. Lysine 6, lysine 9, lysine 13, and lysine 17 each carry N6-butyryllysine; alternate. At lysine 6 the chain carries N6-glutaryllysine; alternate. N6-lactoyllysine; alternate is present on residues lysine 6, lysine 9, lysine 13, and lysine 17. N6-propionyllysine; alternate is present on lysine 9. N6-acetyl-N6-methyllysine; alternate is present on lysine 13. Lysine 13 is subject to N6-glutaryllysine; alternate. An N6-methyllysine; alternate modification is found at lysine 13. Residue lysine 17 is modified to N6-propionyllysine; alternate. A DNA-binding region spans residues 17–21 (KRHRK). The residue at position 21 (lysine 21) is an N6-methyllysine; alternate. Position 21 is an N6,N6,N6-trimethyllysine; alternate (lysine 21). Lysine 21 is modified (N6,N6-dimethyllysine; alternate). At lysine 21 the chain carries N6-methylated lysine. An N6-(2-hydroxyisobutyryl)lysine; alternate mark is found at lysine 32 and lysine 45. Lysine 32 is subject to N6-acetyllysine. Residues lysine 32 and lysine 45 each carry the N6-butyryllysine; alternate modification. Lysine 32 is subject to N6-glutaryllysine; alternate. Position 32 is an N6-lactoyllysine; alternate (lysine 32). N6-propionyllysine; alternate is present on residues lysine 32 and lysine 45. At lysine 32 the chain carries N6-succinyllysine; alternate. Lysine 32 is covalently cross-linked (Glycyl lysine isopeptide (Lys-Gly) (interchain with G-Cter in UFM1); alternate). Residue serine 48 is modified to Phosphoserine; by PAK2. The residue at position 52 (tyrosine 52) is a Phosphotyrosine. Lysine 60 carries the post-translational modification N6-acetyllysine. An N6-glutaryllysine; alternate mark is found at lysine 60, lysine 78, and lysine 80. Lysine 60 carries the N6-(2-hydroxyisobutyryl)lysine modification. Residues lysine 78 and lysine 80 each carry the N6-(2-hydroxyisobutyryl)lysine; alternate modification. N6-butyryllysine; alternate occurs at positions 78 and 80. Position 78 is an N6-lactoyllysine; alternate (lysine 78). N6-propionyllysine; alternate occurs at positions 78 and 80. Lysine 78 carries the post-translational modification N6-succinyllysine. At lysine 80 the chain carries N6-acetyllysine. At tyrosine 89 the chain carries Phosphotyrosine. Lysine 92 bears the N6-(2-hydroxyisobutyryl)lysine; alternate mark. Lysine 92 carries the post-translational modification N6-butyryllysine; alternate. At lysine 92 the chain carries N6-glutaryllysine; alternate. Lysine 92 bears the N6-lactoyllysine; alternate mark. Lysine 92 carries the post-translational modification N6-propionyllysine; alternate. At lysine 92 the chain carries N6-succinyllysine; alternate. N6-acetyllysine; alternate is present on lysine 92. Residue lysine 92 forms a Glycyl lysine isopeptide (Lys-Gly) (interchain with G-Cter in ubiquitin); alternate linkage.

It belongs to the histone H4 family. As to quaternary structure, the nucleosome is a histone octamer containing two molecules each of H2A, H2B, H3 and H4 assembled in one H3-H4 heterotetramer and two H2A-H2B heterodimers. The octamer wraps approximately 147 bp of DNA. In terms of processing, acetylation at Lys-6 (H4K5ac), Lys-9 (H4K8ac), Lys-13 (H4K12ac) and Lys-17 (H4K16ac) occurs in coding regions of the genome but not in heterochromatin. Citrullination at Arg-4 (H4R3ci) by PADI4 impairs methylation. Post-translationally, monomethylation and asymmetric dimethylation at Arg-4 (H4R3me1 and H4R3me2a, respectively) by PRMT1 favors acetylation at Lys-9 (H4K8ac) and Lys-13 (H4K12ac). Demethylation is performed by JMJD6. Symmetric dimethylation on Arg-4 (H4R3me2s) by the PRDM1/PRMT5 complex may play a crucial role in the germ-cell lineage. In terms of processing, monomethylated, dimethylated or trimethylated at Lys-21 (H4K20me1, H4K20me2, H4K20me3). Monomethylation is performed by KMT5A/SET8. Trimethylation is performed by KMT5B and KMT5C and induces gene silencing. Monomethylated at Lys-13 (H4K12me1) by N6AMT1; H4K12me1 modification is present at the promoters of numerous genes encoding cell cycle regulators. Acetyl-methylated at Lys-6 and Lys-13 (H4K5acme and H4K12acme, respectively), acetyl-methylation is an epigenetic mark of active chromatin associated with increased transcriptional initiation. Acetyl-methylation is formed by acetylation by EP300/p300 of lysine residues that are already monomethylated on the same side chain. H4K5acme and H4K12acme marks specifically bind BRD2. Post-translationally, phosphorylated by pak2 at Ser-48 (H4S47ph). This phosphorylation increases the association of H3.3-H4 with the histone chaperone HIRA, thus promoting nucleosome assembly of H3.3-H4 and inhibiting nucleosome assembly of H3.1-H4. In terms of processing, ubiquitinated by the CUL4-DDB-RBX1 complex in response to ultraviolet irradiation. This may weaken the interaction between histones and DNA and facilitate DNA accessibility to repair proteins. Monoubiquitinated at Lys-92 of histone H4 (H4K91ub1) in response to DNA damage. The exact role of H4K91ub1 in DNA damage response is still unclear but it may function as a licensing signal for additional histone H4 post-translational modifications such as H4 Lys-21 methylation (H4K20me). Sumoylated, which is associated with transcriptional repression. Post-translationally, butyrylation of histones marks active promoters and competes with histone acetylation. In terms of processing, glutarylation at Lys-92 (H4K91glu) destabilizes nucleosomes by promoting dissociation of the H2A-H2B dimers from nucleosomes. Ufmylated; monofmylated by UFL1 at Lys-32 (H4K31Ufm1) in response to DNA damage. Post-translationally, lactylated in macrophages by EP300/P300 by using lactoyl-CoA directly derived from endogenous or exogenous lactate, leading to stimulates gene transcription. Delactylated by SIRT3 at Lys-17 (H4K16la).

The protein resides in the nucleus. The protein localises to the chromosome. Functionally, core component of nucleosome. Nucleosomes wrap and compact DNA into chromatin, limiting DNA accessibility to the cellular machineries which require DNA as a template. Histones thereby play a central role in transcription regulation, DNA repair, DNA replication and chromosomal stability. DNA accessibility is regulated via a complex set of post-translational modifications of histones, also called histone code, and nucleosome remodeling. This is Histone H4 from Xenopus laevis (African clawed frog).